We begin with the raw amino-acid sequence, 173 residues long: Lens fiber membrane intrinsic protein (173 aa).

Residues 1–3 (MYS) are Cytoplasmic-facing. A helical transmembrane segment spans residues 4-24 (FMGGGLFCAWVGTILLVVAMA). Residues 25–66 (TDHWMQYRLSGSFAHQGLWRYCLGNKCYLQTDSIAYWNATRA) lie on the Extracellular side of the membrane. 2 C-linked (Man) tryptophan glycosylation sites follow: W43 and W61. N62 carries N-linked (GlcNAc...) asparagine glycosylation. Residues 67 to 87 (FMILSALCAISGIIMGIMAFA) traverse the membrane as a helical segment. Over 88-98 (HQPTFSRISRP) the chain is Cytoplasmic. Residues 99 to 119 (FSAGIMFFSSTLFVVLALAIY) form a helical membrane-spanning segment. The Extracellular portion of the chain corresponds to 120 to 140 (TGVTVSFLGRRFGDWRFSWSY). The chain crosses the membrane as a helical span at residues 141 to 161 (ILGWVAVLMTFFAGIFYMCAY). The Cytoplasmic portion of the chain corresponds to 162 to 173 (RVHECRRLSTPR). S170 bears the Phosphoserine mark. At T171 the chain carries Phosphothreonine.

The protein belongs to the PMP-22/EMP/MP20 family. Seems to be associated with itself or another lens membrane component via disulfide bonds. In terms of tissue distribution, eye lens specific.

It is found in the membrane. Its function is as follows. Present in the thicker 16-17 nm junctions of mammalian lens fiber cells, where it may contribute to cell junctional organization. Acts as a receptor for calmodulin. May play an important role in both lens development and cataractogenesis. The chain is Lens fiber membrane intrinsic protein (LIM2) from Homo sapiens (Human).